A 62-amino-acid polypeptide reads, in one-letter code: Conotoxin Pn-014 (62 aa).

A signal peptide spans 1–22 (MRCLPVFVILLLLIASAPSVDA). The propeptide occupies 23–48 (RPKTKDDIPLVSFQDHAKRILQTFES). Position 61 is a tryptophan amide (tryptophan 61).

This sequence belongs to the conotoxin T superfamily. Contains 2 disulfide bonds that can be either 'C1-C3, C2-C4' or 'C1-C4, C2-C3', since these disulfide connectivities have been observed for conotoxins with cysteine framework V (for examples, see AC P0DQQ7 and AC P81755). Expressed by the venom duct.

Its subcellular location is the secreted. This is Conotoxin Pn-014 from Conus pennaceus (Feathered cone).